The chain runs to 665 residues: RNA-directed RNA polymerase (665 aa).

Positions 310 to 485 constitute a RdRp catalytic domain; sequence NKEEKVKEWS…LKEGKVNPSP (176 aa). Residues Asp454, Tyr491, and Gly495 each coordinate Mg(2+).

Part of the packaging complex composed of RDRP, P4 and P7. Interacts with P7. Requires Mg(2+) as cofactor. Mn(2+) serves as cofactor.

It is found in the virion. The catalysed reaction is RNA(n) + a ribonucleoside 5'-triphosphate = RNA(n+1) + diphosphate. Functionally, rna-dependent RNA polymerase part of the packaging complex that packages the viral RNA segments, replicate them into a double-stranded form and transcribe them. This chain is RNA-directed RNA polymerase (P2), found in Pseudomonas phage phi6 (Bacteriophage phi-6).